A 435-amino-acid polypeptide reads, in one-letter code: E3 ubiquitin-protein ligase RNFT1 (435 aa).

A disordered region spans residues 1 to 62 (MPLFLLSLPT…SSEDASTPQC (62 aa)). A compositionally biased stretch (basic and acidic residues) spans 16–34 (GHERRQRPEAKTSGSEKKY). The segment covering 40 to 62 (ANRSQLHSPPGTGSSEDASTPQC) has biased composition (polar residues). 6 helical membrane-spanning segments follow: residues 158–178 (ILILSVKLVMQHITGISLGIG), 203–223 (IQCAWLLVFLAGSSVLLYYTF), 233–253 (IFLNPTLDHLSFWEVFWIVGI), 256–276 (FILKFFFMGLKCLILLVPSFI), 298–318 (TFVPIPVWFRYLISYGEFGNV), and 323–343 (LGILLALLYLILKLLEFFGHL). A required for ubiquitin ligase activity and for protection against ER stress-induced cell death region spans residues 368-419 (CSDVDDICSICQAEFQKPILLICQHIFCEECMTLWFNREKTCPLCRTVISDH). The RING-type zinc finger occupies 375 to 413 (CSICQAEFQKPILLICQHIFCEECMTLWFNREKTCPLCR).

As to expression, expressed at highest levels in testis, lower levels in heart, liver, lung, and kidney. Not detected in brain, ovary, and uterus. Down-regulated in testis from patients with maturation arrest (MA) or Sertoli cell-only syndrome (SCOS). Ubiquitously expressed with high expression in testis.

It localises to the endoplasmic reticulum membrane. The enzyme catalyses S-ubiquitinyl-[E2 ubiquitin-conjugating enzyme]-L-cysteine + [acceptor protein]-L-lysine = [E2 ubiquitin-conjugating enzyme]-L-cysteine + N(6)-ubiquitinyl-[acceptor protein]-L-lysine.. It functions in the pathway protein modification; protein ubiquitination. E3 ubiquitin-protein ligase that acts in the endoplasmic reticulum (ER)-associated degradation (ERAD) pathway, which targets misfolded proteins that accumulate in the endoplasmic reticulum (ER) for ubiquitination and subsequent proteasome-mediated degradation. Protects cells from ER stress-induced apoptosis. The polypeptide is E3 ubiquitin-protein ligase RNFT1 (RNFT1) (Homo sapiens (Human)).